Consider the following 101-residue polypeptide: Putative UPF0377 protein YBL108W (101 aa).

This sequence belongs to the UPF0377 family.

This Saccharomyces cerevisiae (strain ATCC 204508 / S288c) (Baker's yeast) protein is Putative UPF0377 protein YBL108W.